Consider the following 304-residue polypeptide: UDP-N-acetylenolpyruvoylglucosamine reductase (304 aa).

One can recognise an FAD-binding PCMH-type domain in the interval 33 to 198 (RVGGPVDILL…ITATFCFESG (166 aa)). Arg-177 is a catalytic residue. Residue Ser-227 is the Proton donor of the active site. Glu-297 is an active-site residue.

This sequence belongs to the MurB family. FAD is required as a cofactor.

The protein localises to the cytoplasm. The catalysed reaction is UDP-N-acetyl-alpha-D-muramate + NADP(+) = UDP-N-acetyl-3-O-(1-carboxyvinyl)-alpha-D-glucosamine + NADPH + H(+). The protein operates within cell wall biogenesis; peptidoglycan biosynthesis. In terms of biological role, cell wall formation. This chain is UDP-N-acetylenolpyruvoylglucosamine reductase, found in Clostridium botulinum (strain Alaska E43 / Type E3).